The primary structure comprises 108 residues: Large ribosomal subunit protein uL24 (108 aa).

Belongs to the universal ribosomal protein uL24 family. In terms of assembly, part of the 50S ribosomal subunit.

One of two assembly initiator proteins, it binds directly to the 5'-end of the 23S rRNA, where it nucleates assembly of the 50S subunit. Its function is as follows. One of the proteins that surrounds the polypeptide exit tunnel on the outside of the subunit. The sequence is that of Large ribosomal subunit protein uL24 from Citrifermentans bemidjiense (strain ATCC BAA-1014 / DSM 16622 / JCM 12645 / Bem) (Geobacter bemidjiensis).